We begin with the raw amino-acid sequence, 191 residues long: dCTP deaminase, dUMP-forming (191 aa).

DCTP is bound by residues Lys101–Arg106, Asp119, Thr127–Glu129, Gln148, Tyr162, and Gln174. The Proton donor/acceptor role is filled by Glu129. The tract at residues Asn169 to Ile191 is disordered. Polar residues predominate over residues Tyr171–His183.

The protein belongs to the dCTP deaminase family. Homotrimer.

It catalyses the reaction dCTP + 2 H2O = dUMP + NH4(+) + diphosphate. Its pathway is pyrimidine metabolism; dUMP biosynthesis; dUMP from dCTP: step 1/1. Functionally, bifunctional enzyme that catalyzes both the deamination of dCTP to dUTP and the hydrolysis of dUTP to dUMP without releasing the toxic dUTP intermediate. This is dCTP deaminase, dUMP-forming from Pseudarthrobacter chlorophenolicus (strain ATCC 700700 / DSM 12829 / CIP 107037 / JCM 12360 / KCTC 9906 / NCIMB 13794 / A6) (Arthrobacter chlorophenolicus).